Consider the following 551-residue polypeptide: Probable terpene synthase 8 (551 aa).

Residues Asp-307, Asp-311, and Glu-457 each coordinate Mg(2+). The DDXXD motif motif lies at 307–311; that stretch reads DDTYD.

It belongs to the terpene synthase family. The cofactor is Mg(2+).

Functionally, probable sesquiterpene synthase. The chain is Probable terpene synthase 8 (TPS8) from Ricinus communis (Castor bean).